The primary structure comprises 139 residues: 6,7-dimethyl-8-ribityllumazine synthase (139 aa).

5-amino-6-(D-ribitylamino)uracil-binding positions include F11, 42-44 (ALE), and 66-68 (VVI). Residue 71–72 (ET) coordinates (2S)-2-hydroxy-3-oxobutyl phosphate. The active-site Proton donor is the H74. N98 is a 5-amino-6-(D-ribitylamino)uracil binding site. R112 serves as a coordination point for (2S)-2-hydroxy-3-oxobutyl phosphate.

It belongs to the DMRL synthase family.

It catalyses the reaction (2S)-2-hydroxy-3-oxobutyl phosphate + 5-amino-6-(D-ribitylamino)uracil = 6,7-dimethyl-8-(1-D-ribityl)lumazine + phosphate + 2 H2O + H(+). The protein operates within cofactor biosynthesis; riboflavin biosynthesis; riboflavin from 2-hydroxy-3-oxobutyl phosphate and 5-amino-6-(D-ribitylamino)uracil: step 1/2. Catalyzes the formation of 6,7-dimethyl-8-ribityllumazine by condensation of 5-amino-6-(D-ribitylamino)uracil with 3,4-dihydroxy-2-butanone 4-phosphate. This is the penultimate step in the biosynthesis of riboflavin. The protein is 6,7-dimethyl-8-ribityllumazine synthase of Zymomonas mobilis subsp. mobilis (strain ATCC 31821 / ZM4 / CP4).